An 85-amino-acid chain; its full sequence is MRTLTLCWLALLALAVTGVLLGGAGDSPWLLAAVLACAVAKGWLIGERFMELAHAPALWRRLLLAWPLLMALAVGAALYLARMNN.

The next 3 membrane-spanning stretches (helical) occupy residues 4-24 (LTLC…LGGA), 27-47 (SPWL…LIGE), and 61-81 (RLLL…LYLA).

The protein localises to the cell membrane. This is an uncharacterized protein from Pseudomonas aeruginosa (strain ATCC 15692 / DSM 22644 / CIP 104116 / JCM 14847 / LMG 12228 / 1C / PRS 101 / PAO1).